The chain runs to 371 residues: uncharacterized protein (371 aa).

Residues 339 to 371 (KVTHEDLVKNRPRSPVRPPIPATAKTPDLPERH) are disordered.

This is an uncharacterized protein from Escherichia coli (strain K12).